We begin with the raw amino-acid sequence, 193 residues long: NADH-quinone oxidoreductase subunit B (193 aa).

4 residues coordinate [4Fe-4S] cluster: C72, C73, C137, and C167.

It belongs to the complex I 20 kDa subunit family. NDH-1 is composed of 14 different subunits. Subunits NuoB, C, D, E, F, and G constitute the peripheral sector of the complex. The cofactor is [4Fe-4S] cluster.

It is found in the cell inner membrane. The catalysed reaction is a quinone + NADH + 5 H(+)(in) = a quinol + NAD(+) + 4 H(+)(out). Its function is as follows. NDH-1 shuttles electrons from NADH, via FMN and iron-sulfur (Fe-S) centers, to quinones in the respiratory chain. The immediate electron acceptor for the enzyme in this species is believed to be ubiquinone. Couples the redox reaction to proton translocation (for every two electrons transferred, four hydrogen ions are translocated across the cytoplasmic membrane), and thus conserves the redox energy in a proton gradient. This Bartonella henselae (strain ATCC 49882 / DSM 28221 / CCUG 30454 / Houston 1) (Rochalimaea henselae) protein is NADH-quinone oxidoreductase subunit B.